We begin with the raw amino-acid sequence, 479 residues long: MSPQTETKASVGFKAGVKDYKLTYYTPEYETKDTDILAAFRVTPQPGVPPEEAGAAVAAESSTGTWTTVWTDGLTSLDRYKGRCYHIEPVVGEENQYIAYVAYPLDLFEEGSVTNMFTSIVGNVFGFKALRALRLEDLRIPTSYSKTFQGPPHGIQVERDKLNKYGRPLLGCTIKPKLGLSAKNYGRAVYECLRGGLDFTKDDENVNSQPFMRWRDRFVFCAEAIYKAQAETGEIKGHYLNATAGTCEEMIKRAVFARELGVPIVMHDYLTGGFTANTSLAHYCRDNGLLLHIHRAMHAVIDRQKNHGMHFRVLAKALRMSGGDHIHAGTVVGKLEGEREMTLGFVDLLRDDFIEKDRSRGIFFTQDWVSMPGVIPVASGGIHVWHMPALTEIFGDDSVLQFGGGTLGHPWGNAPGAVANRVALEACVQARNEGRDLAREGAEIIREASKWSPELAAACEVWKQIKFDFEPVDKLDKTK.

Residues 1–2 (MS) constitute a propeptide that is removed on maturation. The residue at position 3 (Pro3) is an N-acetylproline. Position 14 is an N6,N6,N6-trimethyllysine (Lys14). Residues Asn123 and Thr173 each coordinate substrate. The active-site Proton acceptor is the Lys175. Lys177 lines the substrate pocket. The Mg(2+) site is built by Lys201, Asp203, and Glu204. Lys201 carries the post-translational modification N6-carboxylysine. The Proton acceptor role is filled by His294. Residues Arg295, His327, and Ser379 each coordinate substrate.

Belongs to the RuBisCO large chain family. Type I subfamily. As to quaternary structure, heterohexadecamer of 8 large chains and 8 small chains; disulfide-linked. The disulfide link is formed within the large subunit homodimers. Requires Mg(2+) as cofactor. In terms of processing, the disulfide bond which can form in the large chain dimeric partners within the hexadecamer appears to be associated with oxidative stress and protein turnover.

It is found in the plastid. The protein resides in the chloroplast. The catalysed reaction is 2 (2R)-3-phosphoglycerate + 2 H(+) = D-ribulose 1,5-bisphosphate + CO2 + H2O. The enzyme catalyses D-ribulose 1,5-bisphosphate + O2 = 2-phosphoglycolate + (2R)-3-phosphoglycerate + 2 H(+). RuBisCO catalyzes two reactions: the carboxylation of D-ribulose 1,5-bisphosphate, the primary event in carbon dioxide fixation, as well as the oxidative fragmentation of the pentose substrate in the photorespiration process. Both reactions occur simultaneously and in competition at the same active site. This is Ribulose bisphosphate carboxylase large chain from Ananas comosus (Pineapple).